Reading from the N-terminus, the 304-residue chain is Non-specific ribonucleoside hydrolase RihC (304 aa).

The active site involves histidine 233.

The protein belongs to the IUNH family. RihC subfamily.

Hydrolyzes both purine and pyrimidine ribonucleosides with a broad-substrate specificity. The polypeptide is Non-specific ribonucleoside hydrolase RihC (Shigella boydii serotype 18 (strain CDC 3083-94 / BS512)).